The sequence spans 264 residues: Glutamate racemase (264 aa).

Substrate contacts are provided by residues 10-11 (DS) and 42-43 (YG). Cys-73 serves as the catalytic Proton donor/acceptor. 74-75 (NT) is a substrate binding site. Cys-183 functions as the Proton donor/acceptor in the catalytic mechanism. 184–185 (TH) contributes to the substrate binding site.

Belongs to the aspartate/glutamate racemases family.

The enzyme catalyses L-glutamate = D-glutamate. It functions in the pathway cell wall biogenesis; peptidoglycan biosynthesis. Its function is as follows. Provides the (R)-glutamate required for cell wall biosynthesis. The polypeptide is Glutamate racemase (Streptococcus mutans serotype c (strain ATCC 700610 / UA159)).